The chain runs to 174 residues: Transcriptional repressor NrdR (174 aa).

Residues 3–34 (CPFCQHSDTRVIDSRVSEDGTTIRRRRECEAC) fold into a zinc finger. The ATP-cone domain maps to 49-139 (PTVVKSDGGR…VYRSFQDVAD (91 aa)).

This sequence belongs to the NrdR family. Requires Zn(2+) as cofactor.

Functionally, negatively regulates transcription of bacterial ribonucleotide reductase nrd genes and operons by binding to NrdR-boxes. The sequence is that of Transcriptional repressor NrdR from Xanthomonas oryzae pv. oryzae (strain MAFF 311018).